We begin with the raw amino-acid sequence, 314 residues long: Phosphoribosylaminoimidazole-succinocarboxamide synthase (314 aa).

This sequence belongs to the SAICAR synthetase family.

It catalyses the reaction 5-amino-1-(5-phospho-D-ribosyl)imidazole-4-carboxylate + L-aspartate + ATP = (2S)-2-[5-amino-1-(5-phospho-beta-D-ribosyl)imidazole-4-carboxamido]succinate + ADP + phosphate + 2 H(+). It functions in the pathway purine metabolism; IMP biosynthesis via de novo pathway; 5-amino-1-(5-phospho-D-ribosyl)imidazole-4-carboxamide from 5-amino-1-(5-phospho-D-ribosyl)imidazole-4-carboxylate: step 1/2. This chain is Phosphoribosylaminoimidazole-succinocarboxamide synthase, found in Bacteroides fragilis (strain ATCC 25285 / DSM 2151 / CCUG 4856 / JCM 11019 / LMG 10263 / NCTC 9343 / Onslow / VPI 2553 / EN-2).